The primary structure comprises 157 residues: uncharacterized protein (157 aa).

This is an uncharacterized protein from Acidianus hospitalis (AFV-1).